Here is a 172-residue protein sequence, read N- to C-terminus: 3-hydroxydecanoyl-[acyl-carrier-protein] dehydratase (172 aa).

Residue histidine 71 is part of the active site.

It belongs to the thioester dehydratase family. FabA subfamily. As to quaternary structure, homodimer.

Its subcellular location is the cytoplasm. It catalyses the reaction a (3R)-hydroxyacyl-[ACP] = a (2E)-enoyl-[ACP] + H2O. The enzyme catalyses (3R)-hydroxydecanoyl-[ACP] = (2E)-decenoyl-[ACP] + H2O. It carries out the reaction (2E)-decenoyl-[ACP] = (3Z)-decenoyl-[ACP]. Its pathway is lipid metabolism; fatty acid biosynthesis. Necessary for the introduction of cis unsaturation into fatty acids. Catalyzes the dehydration of (3R)-3-hydroxydecanoyl-ACP to E-(2)-decenoyl-ACP and then its isomerization to Z-(3)-decenoyl-ACP. Can catalyze the dehydratase reaction for beta-hydroxyacyl-ACPs with saturated chain lengths up to 16:0, being most active on intermediate chain length. The polypeptide is 3-hydroxydecanoyl-[acyl-carrier-protein] dehydratase (Brucella abortus (strain S19)).